The primary structure comprises 445 residues: Phosphoglucosamine mutase (445 aa).

Catalysis depends on serine 101, which acts as the Phosphoserine intermediate. Mg(2+) is bound by residues serine 101, aspartate 240, aspartate 242, and aspartate 244. The residue at position 101 (serine 101) is a Phosphoserine.

The protein belongs to the phosphohexose mutase family. Requires Mg(2+) as cofactor. In terms of processing, activated by phosphorylation.

It catalyses the reaction alpha-D-glucosamine 1-phosphate = D-glucosamine 6-phosphate. Its function is as follows. Catalyzes the conversion of glucosamine-6-phosphate to glucosamine-1-phosphate. The chain is Phosphoglucosamine mutase from Pseudomonas fluorescens (strain Pf0-1).